A 338-amino-acid polypeptide reads, in one-letter code: Ketol-acid reductoisomerase (NADP(+)) (338 aa).

Positions 1–181 (MKVYYDKDCN…GGGRSGIIET (181 aa)) constitute a KARI N-terminal Rossmann domain. NADP(+) is bound by residues 24–27 (YGSQ), R47, S50, S52, and 82–85 (DETQ). Residue H107 is part of the active site. Position 133 (G133) interacts with NADP(+). One can recognise a KARI C-terminal knotted domain in the interval 182 to 327 (NFREETETDL…ARLRAMMPWI (146 aa)). 4 residues coordinate Mg(2+): D190, E194, E226, and E230. S251 lines the substrate pocket.

This sequence belongs to the ketol-acid reductoisomerase family. The cofactor is Mg(2+).

It catalyses the reaction (2R)-2,3-dihydroxy-3-methylbutanoate + NADP(+) = (2S)-2-acetolactate + NADPH + H(+). The catalysed reaction is (2R,3R)-2,3-dihydroxy-3-methylpentanoate + NADP(+) = (S)-2-ethyl-2-hydroxy-3-oxobutanoate + NADPH + H(+). Its pathway is amino-acid biosynthesis; L-isoleucine biosynthesis; L-isoleucine from 2-oxobutanoate: step 2/4. It participates in amino-acid biosynthesis; L-valine biosynthesis; L-valine from pyruvate: step 2/4. Its function is as follows. Involved in the biosynthesis of branched-chain amino acids (BCAA). Catalyzes an alkyl-migration followed by a ketol-acid reduction of (S)-2-acetolactate (S2AL) to yield (R)-2,3-dihydroxy-isovalerate. In the isomerase reaction, S2AL is rearranged via a Mg-dependent methyl migration to produce 3-hydroxy-3-methyl-2-ketobutyrate (HMKB). In the reductase reaction, this 2-ketoacid undergoes a metal-dependent reduction by NADPH to yield (R)-2,3-dihydroxy-isovalerate. In Pelobacter propionicus (strain DSM 2379 / NBRC 103807 / OttBd1), this protein is Ketol-acid reductoisomerase (NADP(+)).